The chain runs to 282 residues: B3 domain-containing protein At5g06250 (282 aa).

The TF-B3 DNA-binding region spans 46-159 (FEKSLTPSDV…RLFIGWRRRG (114 aa)).

It localises to the nucleus. The chain is B3 domain-containing protein At5g06250 from Arabidopsis thaliana (Mouse-ear cress).